A 151-amino-acid chain; its full sequence is Large ribosomal subunit protein uL15 (151 aa).

The span at 1–14 shows a compositional bias: basic residues; sequence MRREKKSRAYRGSR. A disordered region spans residues 1 to 33; it reads MRREKKSRAYRGSRTHGWGRVGQHRKSGSRGGR.

Belongs to the universal ribosomal protein uL15 family. Part of the 50S ribosomal subunit.

Its function is as follows. Binds to the 23S rRNA. This chain is Large ribosomal subunit protein uL15, found in Thermofilum pendens (strain DSM 2475 / Hrk 5).